The following is a 168-amino-acid chain: Segregation and condensation protein B (168 aa).

It belongs to the ScpB family. Homodimer. Homodimerization may be required to stabilize the binding of ScpA to the Smc head domains. Component of a cohesin-like complex composed of ScpA, ScpB and the Smc homodimer, in which ScpA and ScpB bind to the head domain of Smc. The presence of the three proteins is required for the association of the complex with DNA.

The protein resides in the cytoplasm. Participates in chromosomal partition during cell division. May act via the formation of a condensin-like complex containing Smc and ScpA that pull DNA away from mid-cell into both cell halves. The chain is Segregation and condensation protein B from Caldanaerobacter subterraneus subsp. tengcongensis (strain DSM 15242 / JCM 11007 / NBRC 100824 / MB4) (Thermoanaerobacter tengcongensis).